The following is a 477-amino-acid chain: UDP-N-acetylmuramate--L-alanine ligase (477 aa).

118 to 124 lines the ATP pocket; the sequence is GTHGKTS.

The protein belongs to the MurCDEF family.

The protein localises to the cytoplasm. It catalyses the reaction UDP-N-acetyl-alpha-D-muramate + L-alanine + ATP = UDP-N-acetyl-alpha-D-muramoyl-L-alanine + ADP + phosphate + H(+). Its pathway is cell wall biogenesis; peptidoglycan biosynthesis. Functionally, cell wall formation. The sequence is that of UDP-N-acetylmuramate--L-alanine ligase from Corynebacterium diphtheriae (strain ATCC 700971 / NCTC 13129 / Biotype gravis).